The sequence spans 136 residues: Transcription antitermination protein NusB (136 aa).

Belongs to the NusB family.

Functionally, involved in transcription antitermination. Required for transcription of ribosomal RNA (rRNA) genes. Binds specifically to the boxA antiterminator sequence of the ribosomal RNA (rrn) operons. The chain is Transcription antitermination protein NusB from Arthrobacter sp. (strain FB24).